The chain runs to 425 residues: Monoacylglycerol lipase ABHD2 (425 aa).

Topologically, residues 1-9 (MNAMLETPE) are cytoplasmic. A helical; Signal-anchor for type II membrane protein transmembrane segment spans residues 10 to 30 (LPAVFDGVKLAAVAAVLYVIV). Residues 31 to 425 (RCLNLKSPTA…DTEQVEADLE (395 aa)) are Extracellular-facing. The 255-residue stretch at 128–382 (MVICPGIANH…HGGHLGFFEG (255 aa)) folds into the AB hydrolase-1 domain. Residue N136 is glycosylated (N-linked (GlcNAc...) asparagine). S207 acts as the Nucleophile in catalysis. Catalysis depends on charge relay system residues D345 and H376. N410 carries an N-linked (GlcNAc...) asparagine glycan.

This sequence belongs to the AB hydrolase superfamily. AB hydrolase 4 family.

Its subcellular location is the cell membrane. The catalysed reaction is Hydrolyzes glycerol monoesters of long-chain fatty acids.. It catalyses the reaction an acetyl ester + H2O = an aliphatic alcohol + acetate + H(+). It carries out the reaction a triacylglycerol + H2O = a diacylglycerol + a fatty acid + H(+). The enzyme catalyses 2-(5Z,8Z,11Z,14Z-eicosatetraenoyl)-glycerol + H2O = glycerol + (5Z,8Z,11Z,14Z)-eicosatetraenoate + H(+). The catalysed reaction is a butanoate ester + H2O = an aliphatic alcohol + butanoate + H(+). It catalyses the reaction hexadecanoate ester + H2O = an aliphatic alcohol + hexadecanoate + H(+). Its activity is regulated as follows. Acylglycerol lipase activity is activated upon binding to progesterone. Progesterone-dependent acylglycerol lipase that catalyzes hydrolysis of endocannabinoid arachidonoylglycerol (AG) from cell membrane. Acts as a progesterone receptor: progesterone-binding activates the acylglycerol lipase activity, mediating degradation of 1-arachidonoylglycerol (1AG) and 2-arachidonoylglycerol (2AG) to glycerol and arachidonic acid (AA). Also displays an ester hydrolase activity against acetyl ester, butanoate ester and hexadecanoate ester. Plays a key role in sperm capacitation in response to progesterone by mediating degradation of 2AG, an inhibitor of the sperm calcium channel CatSper, leading to calcium influx via CatSper and sperm activation. May also play a role in smooth muscle cells migration. This is Monoacylglycerol lipase ABHD2 (ABHD2) from Macaca fascicularis (Crab-eating macaque).